The chain runs to 580 residues: N(6)-adenosine-methyltransferase catalytic subunit METTL3 (580 aa).

Residues 1–70 (MSDTWSSIQA…PKPSTASAVP (70 aa)) are disordered. S2 bears the N-acetylserine; alternate mark. Residue S2 is modified to Phosphoserine; alternate. Basic and acidic residues predominate over residues 28–37 (QDSGHLDLRN). A phosphoserine mark is found at S43, S48, and S50. Glycyl lysine isopeptide (Lys-Gly) (interchain with G-Cter in SUMO1) cross-links involve residues K177, K211, K212, and K215. The tract at residues 198–219 (LNSSASEPAKEPAKKSRKHAAS) is disordered. The Nuclear localization signal signature appears at 210 to 215 (AKKSRK). 2 positions are modified to phosphoserine: S219 and S243. T348 carries the phosphothreonine modification. S350 is modified (phosphoserine). Residues 377 to 378 (DI) and D395 contribute to the S-adenosyl-L-methionine site. The interval 396–410 (PPWDIHMELPYGTLT) is gate loop 1. Interaction with METTL14 stretches follow at residues 450 to 454 (ERVDE) and 464 to 480 (QRII…NHGK). Positions 462-479 (QLQRIIRTGRTGHWLNHG) are interphase loop. The tract at residues 465-478 (RIIRTGRTGHWLNH) is positively charged region required for RNA-binding. A gate loop 2 region spans residues 507–515 (VRSTSHKPD). S-adenosyl-L-methionine contacts are provided by residues K513, 536–539 (RPHN), and 549–550 (NQ).

The protein belongs to the MT-A70-like family. Heterodimer; heterodimerizes with METTL14 to form an antiparallel heterodimer that constitutes an active methyltransferase. Component of the WMM complex, a N6-methyltransferase complex composed of a catalytic subcomplex, named MAC, and of an associated subcomplex, named MACOM. The MAC subcomplex is composed of METTL3 and METTL14. The MACOM subcomplex is composed of WTAP, ZC3H13, CBLL1/HAKAI, VIRMA, and, in some cases of RBM15 (RBM15 or RBM15B). Interacts with NCBP1/CBP80. Interacts with EIF4E. Interacts with EIF3B. Sumoylation inhibits the N6-adenosine-methyltransferase activity. Sumoylation does not affect subcellular location or interaction with METTL14. Desumoylated by SENP1. In terms of tissue distribution, widely expressed at low level. Expressed in spleen, thymus, prostate, testis, ovary, small intestine, colon and peripheral blood leukocytes.

It is found in the nucleus. It localises to the nucleus speckle. Its subcellular location is the cytoplasm. The enzyme catalyses an adenosine in mRNA + S-adenosyl-L-methionine = an N(6)-methyladenosine in mRNA + S-adenosyl-L-homocysteine + H(+). Its activity is regulated as follows. Methyltransferase activity is regulated by miRNAs via a sequence pairing mechanism. Methyltransferase activity is inhibited by sumoylation. Its function is as follows. The METTL3-METTL14 heterodimer forms a N6-methyltransferase complex that methylates adenosine residues at the N(6) position of some RNAs and regulates various processes such as the circadian clock, differentiation of embryonic and hematopoietic stem cells, cortical neurogenesis, response to DNA damage, differentiation of T-cells and primary miRNA processing. In the heterodimer formed with METTL14, METTL3 constitutes the catalytic core. N6-methyladenosine (m6A), which takes place at the 5'-[AG]GAC-3' consensus sites of some mRNAs, plays a role in mRNA stability, processing, translation efficiency and editing. M6A acts as a key regulator of mRNA stability: methylation is completed upon the release of mRNA into the nucleoplasm and promotes mRNA destabilization and degradation. In embryonic stem cells (ESCs), m6A methylation of mRNAs encoding key naive pluripotency-promoting transcripts results in transcript destabilization, promoting differentiation of ESCs. M6A regulates the length of the circadian clock: acts as an early pace-setter in the circadian loop by putting mRNA production on a fast-track for facilitating nuclear processing, thereby providing an early point of control in setting the dynamics of the feedback loop. M6A also regulates circadian regulation of hepatic lipid metabolism. M6A regulates spermatogonial differentiation and meiosis and is essential for male fertility and spermatogenesis. Also required for oogenesis. Involved in the response to DNA damage: in response to ultraviolet irradiation, METTL3 rapidly catalyzes the formation of m6A on poly(A) transcripts at DNA damage sites, leading to the recruitment of POLK to DNA damage sites. M6A is also required for T-cell homeostasis and differentiation: m6A methylation of transcripts of SOCS family members (SOCS1, SOCS3 and CISH) in naive T-cells promotes mRNA destabilization and degradation, promoting T-cell differentiation. Inhibits the type I interferon response by mediating m6A methylation of IFNB. M6A also takes place in other RNA molecules, such as primary miRNA (pri-miRNAs). Mediates m6A methylation of Xist RNA, thereby participating in random X inactivation: m6A methylation of Xist leads to target YTHDC1 reader on Xist and promote transcription repression activity of Xist. M6A also regulates cortical neurogenesis: m6A methylation of transcripts related to transcription factors, neural stem cells, the cell cycle and neuronal differentiation during brain development promotes their destabilization and decay, promoting differentiation of radial glial cells. METTL3 mediates methylation of pri-miRNAs, marking them for recognition and processing by DGCR8. Acts as a positive regulator of mRNA translation independently of the methyltransferase activity: promotes translation by interacting with the translation initiation machinery in the cytoplasm. Its overexpression in a number of cancer cells suggests that it may participate in cancer cell proliferation by promoting mRNA translation. During human coronavirus SARS-CoV-2 infection, adds m6A modifications in SARS-CoV-2 RNA leading to decreased RIGI binding and subsequently dampening the sensing and activation of innate immune responses. The protein is N(6)-adenosine-methyltransferase catalytic subunit METTL3 of Homo sapiens (Human).